A 159-amino-acid polypeptide reads, in one-letter code: Single-stranded DNA-binding protein 2 (159 aa).

The SSB domain occupies 2–104; that stretch reads MNRVVLVGRL…VVAESVQFLE (103 aa). The disordered stretch occupies residues 106 to 159; the sequence is RNHAEGATSNNYQNEANYSNNNKTSSYRADTSQKSDSFANEGKPIDINPDDLPF. Low complexity predominate over residues 114 to 127; it reads SNNYQNEANYSNNN. The span at 128 to 143 shows a compositional bias: polar residues; the sequence is KTSSYRADTSQKSDSF.

As to quaternary structure, homotetramer.

The protein is Single-stranded DNA-binding protein 2 (ssb2) of Listeria innocua serovar 6a (strain ATCC BAA-680 / CLIP 11262).